The primary structure comprises 254 residues: Alcohol dehydrogenase (254 aa).

Position 10–33 (10–33) interacts with NAD(+); it reads FVAGLGGIGLETSREIVKSGPKNL. Position 138 (S138) interacts with substrate. The Proton acceptor role is filled by Y151.

Belongs to the short-chain dehydrogenases/reductases (SDR) family. As to quaternary structure, homodimer.

The catalysed reaction is a primary alcohol + NAD(+) = an aldehyde + NADH + H(+). It carries out the reaction a secondary alcohol + NAD(+) = a ketone + NADH + H(+). The sequence is that of Alcohol dehydrogenase (Adh) from Scaptomyza crassifemur (Fruit fly).